The sequence spans 441 residues: Damage-control phosphatase ARMT1 (441 aa).

A2 carries the post-translational modification N-acetylalanine. K40 bears the N6-acetyllysine mark. S102 carries the phosphoserine modification. Mn(2+)-binding residues include D253 and N254. Substrate is bound at residue 253 to 254; that stretch reads DN. S-adenosyl-L-methionine contacts are provided by E258 and D291. Position 291 (D291) interacts with Mn(2+). Substrate contacts are provided by residues 367-371 and K404; that span reads DLNYR. The Subfamily III RTxK motif motif lies at 401-404; that stretch reads RTLK.

It belongs to the damage-control phosphatase family. Sugar phosphate phosphatase III subfamily. Mn(2+) serves as cofactor. Requires Ni(2+) as cofactor. Post-translationally, automethylated.

The enzyme catalyses beta-D-fructose 1-phosphate + H2O = D-fructose + phosphate. The catalysed reaction is beta-D-fructose 6-phosphate = dihydroxyacetone + D-glyceraldehyde 3-phosphate. It catalyses the reaction L-glutamyl-[protein] + S-adenosyl-L-methionine = [protein]-L-glutamate 5-O-methyl ester + S-adenosyl-L-homocysteine. In terms of biological role, metal-dependent phosphatase that shows phosphatase activity against several substrates, including fructose-1-phosphate and fructose-6-phosphate. Its preference for fructose-1-phosphate, a strong glycating agent that causes DNA damage rather than a canonical yeast metabolite, suggests a damage-control function in hexose phosphate metabolism. Has also been shown to have O-methyltransferase activity that methylates glutamate residues of target proteins to form gamma-glutamyl methyl ester residues. Possibly methylates PCNA, suggesting it is involved in the DNA damage response. The chain is Damage-control phosphatase ARMT1 from Homo sapiens (Human).